The chain runs to 495 residues: Galactose-1-phosphate uridylyltransferase (495 aa).

The protein belongs to the galactose-1-phosphate uridylyltransferase type 2 family.

It localises to the cytoplasm. It carries out the reaction alpha-D-galactose 1-phosphate + UDP-alpha-D-glucose = alpha-D-glucose 1-phosphate + UDP-alpha-D-galactose. It participates in carbohydrate metabolism; galactose metabolism. The chain is Galactose-1-phosphate uridylyltransferase from Ligilactobacillus salivarius (strain UCC118) (Lactobacillus salivarius).